We begin with the raw amino-acid sequence, 430 residues long: Serine--tRNA ligase (430 aa).

An L-serine-binding site is contributed by Thr235 to Glu237. ATP contacts are provided by residues Arg266–Glu268 and Val282. An L-serine-binding site is contributed by Glu289. Position 353–356 (Glu353–Ser356) interacts with ATP. Residue Ser389 coordinates L-serine.

The protein belongs to the class-II aminoacyl-tRNA synthetase family. Type-1 seryl-tRNA synthetase subfamily. In terms of assembly, homodimer. The tRNA molecule binds across the dimer.

The protein localises to the cytoplasm. The catalysed reaction is tRNA(Ser) + L-serine + ATP = L-seryl-tRNA(Ser) + AMP + diphosphate + H(+). It carries out the reaction tRNA(Sec) + L-serine + ATP = L-seryl-tRNA(Sec) + AMP + diphosphate + H(+). The protein operates within aminoacyl-tRNA biosynthesis; selenocysteinyl-tRNA(Sec) biosynthesis; L-seryl-tRNA(Sec) from L-serine and tRNA(Sec): step 1/1. In terms of biological role, catalyzes the attachment of serine to tRNA(Ser). Is also able to aminoacylate tRNA(Sec) with serine, to form the misacylated tRNA L-seryl-tRNA(Sec), which will be further converted into selenocysteinyl-tRNA(Sec). The sequence is that of Serine--tRNA ligase from Chlorobium phaeovibrioides (strain DSM 265 / 1930) (Prosthecochloris vibrioformis (strain DSM 265)).